A 159-amino-acid polypeptide reads, in one-letter code: S-ribosylhomocysteine lyase 1 (159 aa).

His54, His58, and Cys124 together coordinate Fe cation.

The protein belongs to the LuxS family. Homodimer. It depends on Fe cation as a cofactor.

The catalysed reaction is S-(5-deoxy-D-ribos-5-yl)-L-homocysteine = (S)-4,5-dihydroxypentane-2,3-dione + L-homocysteine. Functionally, involved in the synthesis of autoinducer 2 (AI-2) which is secreted by bacteria and is used to communicate both the cell density and the metabolic potential of the environment. The regulation of gene expression in response to changes in cell density is called quorum sensing. Catalyzes the transformation of S-ribosylhomocysteine (RHC) to homocysteine (HC) and 4,5-dihydroxy-2,3-pentadione (DPD). The polypeptide is S-ribosylhomocysteine lyase 1 (Lactobacillus delbrueckii subsp. bulgaricus (strain ATCC BAA-365 / Lb-18)).